A 351-amino-acid polypeptide reads, in one-letter code: Protein RecA (351 aa).

68–75 (GPESSGKT) provides a ligand contact to ATP.

This sequence belongs to the RecA family.

It is found in the cytoplasm. Functionally, can catalyze the hydrolysis of ATP in the presence of single-stranded DNA, the ATP-dependent uptake of single-stranded DNA by duplex DNA, and the ATP-dependent hybridization of homologous single-stranded DNAs. It interacts with LexA causing its activation and leading to its autocatalytic cleavage. This chain is Protein RecA, found in Thermotoga neapolitana (strain ATCC 49049 / DSM 4359 / NBRC 107923 / NS-E).